Consider the following 79-residue polypeptide: Alpha-actitoxin-Ms11a-4 (79 aa).

The signal sequence occupies residues 1-23; that stretch reads MKVLVAVLVFALLMCMFVDIAES. Residues 24-46 constitute a propeptide that is removed on maturation; that stretch reads RRRDNPEYPSGLRYDEEMGVFKR. 3 disulfide bridges follow: Cys-47–Cys-61, Cys-54–Cys-67, and Cys-60–Cys-76. Tyr-78 carries the post-translational modification Tyrosine amide.

The protein resides in the secreted. The protein localises to the nematocyst. Functionally, alpha-toxins act on postsynaptic membranes, they bind to the nicotinic acetylcholine receptors (nAChR) and thus inhibit them. This toxin very weakly competes with alpha-bungarotoxin for binding to orthosteric sites on muscle-type T.carlifornicus (IC(50)=14.95 uM) and human alpha-7/CHRNA7 nAChRs (IC(50)&gt;45 uM). This chain is Alpha-actitoxin-Ms11a-4, found in Metridium senile (Brown sea anemone).